An 88-amino-acid polypeptide reads, in one-letter code: HssA/B-like protein 9 (88 aa).

The segment covering methionine 1 to methionine 14 has biased composition (polar residues). The disordered stretch occupies residues methionine 1–glycine 26.

The protein belongs to the hssA/B family.

This is HssA/B-like protein 9 (hssl9) from Dictyostelium discoideum (Social amoeba).